Consider the following 147-residue polypeptide: Delta-latroinsectotoxin-Lhe1a (147 aa).

ANK repeat units lie at residues 57 to 59 (VSI), 66 to 78 (NNWT…IYFK), 79 to 96 (KNPA…DIEA), and 98 to 125 (TSIM…TLDE).

Belongs to the cationic peptide 01 (latrotoxin) family. 04 (delta-latroinsectotoxin) subfamily. As to quaternary structure, homotetramer in membrane. Expressed by the venom gland.

Its subcellular location is the secreted. The protein resides in the target cell membrane. In terms of biological role, insecticidal presynaptic neurotoxin that induces massive neurotransmitter release at insect (but not vertebrate) neuromuscular junctions. Native toxin forms cation-permeable pores (with high permeability to calcium) in lipid membranes locust muscle membrane and artificial lipid bilayers. May bind to insect neurexin-1 homolog, insect adhesion G protein-coupled receptor L1 homolog, and insect receptor-type tyrosine-protein phosphatase S homolog, and induces neurotransmitter exocytosis both by forming tetrameric pores in membranes and signaling via G protein-coupled receptor. Oligomerization is a process independent of divalent cations. The protein is Delta-latroinsectotoxin-Lhe1a of Latrodectus hesperus (Western black widow spider).